The following is a 980-amino-acid chain: Putative helicase 087L (980 aa).

A Helicase ATP-binding domain is found at 59–246 (INPHTLYDGV…IDLFNLILRT (188 aa)). 72–79 (HEMGTGKT) contributes to the ATP binding site. The DEAH box motif lies at 189–192 (DEAH). Residues 389-546 (RLSFVFSEFV…SIDLHMYEIA (158 aa)) enclose the Helicase C-terminal domain.

This sequence belongs to the IIV-6 022L family. SNF2/RAD54 helicase subfamily.

This chain is Putative helicase 087L, found in Invertebrate iridescent virus 3 (IIV-3).